A 1127-amino-acid polypeptide reads, in one-letter code: DNA-directed RNA polymerase I subunit RPA2 homolog (1127 aa).

Ser1025 is subject to Phosphoserine.

Belongs to the RNA polymerase beta chain family. As to quaternary structure, component of the RNA polymerase I (Pol I) complex consisting of at least 13 subunits.

The protein localises to the nucleus. The protein resides in the nucleolus. The enzyme catalyses RNA(n) + a ribonucleoside 5'-triphosphate = RNA(n+1) + diphosphate. With respect to regulation, antisense ribosomal siRNAs silence rRNA expression during the elongation phase by decreasing rpoa-2 occupancy downstream of the RNAi-targeted region in nrde-2-dependent manner. In terms of biological role, DNA-dependent RNA polymerase catalyzes the transcription of DNA into RNA using the four ribonucleoside triphosphates as substrates. Second largest core component of RNA polymerase I which synthesizes ribosomal RNA precursors. Proposed to contribute to the polymerase catalytic activity and forms the polymerase active center together with the largest subunit. Pol I is composed of mobile elements and RPA2 is part of the core element with the central large cleft and probably a clamp element that moves to open and close the cleft. Specifically binds to 18S, 5.8S and 26S rDNA, but not to 5S rDNA. The protein is DNA-directed RNA polymerase I subunit RPA2 homolog of Caenorhabditis elegans.